Reading from the N-terminus, the 490-residue chain is Aspartyl/glutamyl-tRNA(Asn/Gln) amidotransferase subunit B (490 aa).

Belongs to the GatB/GatE family. GatB subfamily. As to quaternary structure, heterotrimer of A, B and C subunits.

The catalysed reaction is L-glutamyl-tRNA(Gln) + L-glutamine + ATP + H2O = L-glutaminyl-tRNA(Gln) + L-glutamate + ADP + phosphate + H(+). It catalyses the reaction L-aspartyl-tRNA(Asn) + L-glutamine + ATP + H2O = L-asparaginyl-tRNA(Asn) + L-glutamate + ADP + phosphate + 2 H(+). Its function is as follows. Allows the formation of correctly charged Asn-tRNA(Asn) or Gln-tRNA(Gln) through the transamidation of misacylated Asp-tRNA(Asn) or Glu-tRNA(Gln) in organisms which lack either or both of asparaginyl-tRNA or glutaminyl-tRNA synthetases. The reaction takes place in the presence of glutamine and ATP through an activated phospho-Asp-tRNA(Asn) or phospho-Glu-tRNA(Gln). In Methylobacterium nodulans (strain LMG 21967 / CNCM I-2342 / ORS 2060), this protein is Aspartyl/glutamyl-tRNA(Asn/Gln) amidotransferase subunit B.